Here is a 319-residue protein sequence, read N- to C-terminus: Acetyl-coenzyme A carboxylase carboxyl transferase subunit alpha (319 aa).

Residues 39-293 form the CoA carboxyltransferase C-terminal domain; it reads RLQKKSNDLT…KAVLEKQLHE (255 aa).

It belongs to the AccA family. Acetyl-CoA carboxylase is a heterohexamer composed of biotin carboxyl carrier protein (AccB), biotin carboxylase (AccC) and two subunits each of ACCase subunit alpha (AccA) and ACCase subunit beta (AccD).

The protein resides in the cytoplasm. The enzyme catalyses N(6)-carboxybiotinyl-L-lysyl-[protein] + acetyl-CoA = N(6)-biotinyl-L-lysyl-[protein] + malonyl-CoA. It functions in the pathway lipid metabolism; malonyl-CoA biosynthesis; malonyl-CoA from acetyl-CoA: step 1/1. Component of the acetyl coenzyme A carboxylase (ACC) complex. First, biotin carboxylase catalyzes the carboxylation of biotin on its carrier protein (BCCP) and then the CO(2) group is transferred by the carboxyltransferase to acetyl-CoA to form malonyl-CoA. The polypeptide is Acetyl-coenzyme A carboxylase carboxyl transferase subunit alpha (Neisseria meningitidis serogroup B (strain ATCC BAA-335 / MC58)).